A 215-amino-acid polypeptide reads, in one-letter code: Thiopurine S-methyltransferase (215 aa).

S-adenosyl-L-methionine contacts are provided by Trp10, Leu45, Glu66, and Arg123.

This sequence belongs to the class I-like SAM-binding methyltransferase superfamily. TPMT family.

The protein localises to the cytoplasm. It catalyses the reaction S-adenosyl-L-methionine + a thiopurine = S-adenosyl-L-homocysteine + a thiopurine S-methylether.. This is Thiopurine S-methyltransferase from Pseudomonas putida (strain W619).